The following is a 754-amino-acid chain: DNA repair protein RAD4 (754 aa).

The disordered stretch occupies residues 23-51 (EKAPLSRRRRVRRKNQPLPDAKKKFKTGL). Positions 27-37 (LSRRRRVRRKN) are enriched in basic residues. Residues 250–269 (DFLRAVSKGHGDPDISVQGF) mediate DNA binding. The tract at residues 701–754 (IANHEARPYSEPSEPEDSLDYVSVDKAEESATDDDVGEDYSDFMKELEMSEESD) is disordered. The span at 730–741 (SATDDDVGEDYS) shows a compositional bias: acidic residues.

The protein belongs to the XPC family.

It localises to the cytoplasm. It is found in the nucleus. In terms of biological role, involved in nucleotide excision repair of DNA damaged with UV light, bulky adducts, or cross-linking agents. In Saccharomyces cerevisiae (strain ATCC 204508 / S288c) (Baker's yeast), this protein is DNA repair protein RAD4 (RAD4).